The following is a 236-amino-acid chain: F-box and leucine-rich protein 22 (236 aa).

Residues 1 to 46 (MHITQLNRECLLCLFSFLDKDSRRSLSRTCSQLRDVFEDPTLWPLL) form the F-box domain. LRR repeat units follow at residues 15–40 (FSFL…FEDP), 43–72 (WPLL…SICW), 98–123 (HESL…TLSG), 124–149 (CGHV…RLEN), 150–175 (CARV…HVDF), and 176–201 (CRNV…AERS).

As to quaternary structure, directly interacts with SKP1 and CUL1. Enriched in cardiac muscle (at protein level).

It is found in the cytoplasm. The protein resides in the myofibril. The protein localises to the sarcomere. It localises to the z line. The protein operates within protein modification; protein ubiquitination. Functionally, substrate-recognition component of the SCF (SKP1-CUL1-F-box protein)-type E3 ubiquitin ligase complex. Promotes ubiquitination of sarcomeric proteins alpha-actinin-2 (ACTN2) and filamin-C (FLNC). The chain is F-box and leucine-rich protein 22 (Fbxl22) from Mus musculus (Mouse).